The sequence spans 165 residues: Crossover junction endodeoxyribonuclease RuvC (165 aa).

Catalysis depends on residues Asp7, Glu67, and Asp140. Mg(2+)-binding residues include Asp7, Glu67, and Asp140.

The protein belongs to the RuvC family. In terms of assembly, homodimer which binds Holliday junction (HJ) DNA. The HJ becomes 2-fold symmetrical on binding to RuvC with unstacked arms; it has a different conformation from HJ DNA in complex with RuvA. In the full resolvosome a probable DNA-RuvA(4)-RuvB(12)-RuvC(2) complex forms which resolves the HJ. It depends on Mg(2+) as a cofactor.

It is found in the cytoplasm. The enzyme catalyses Endonucleolytic cleavage at a junction such as a reciprocal single-stranded crossover between two homologous DNA duplexes (Holliday junction).. The RuvA-RuvB-RuvC complex processes Holliday junction (HJ) DNA during genetic recombination and DNA repair. Endonuclease that resolves HJ intermediates. Cleaves cruciform DNA by making single-stranded nicks across the HJ at symmetrical positions within the homologous arms, yielding a 5'-phosphate and a 3'-hydroxyl group; requires a central core of homology in the junction. The consensus cleavage sequence is 5'-(A/T)TT(C/G)-3'. Cleavage occurs on the 3'-side of the TT dinucleotide at the point of strand exchange. HJ branch migration catalyzed by RuvA-RuvB allows RuvC to scan DNA until it finds its consensus sequence, where it cleaves and resolves the cruciform DNA. This is Crossover junction endodeoxyribonuclease RuvC from Dehalococcoides mccartyi (strain ATCC BAA-2266 / KCTC 15142 / 195) (Dehalococcoides ethenogenes (strain 195)).